A 193-amino-acid polypeptide reads, in one-letter code: Adenine phosphoribosyltransferase (193 aa).

The protein belongs to the purine/pyrimidine phosphoribosyltransferase family. Homodimer.

Its subcellular location is the cytoplasm. The catalysed reaction is AMP + diphosphate = 5-phospho-alpha-D-ribose 1-diphosphate + adenine. It functions in the pathway purine metabolism; AMP biosynthesis via salvage pathway; AMP from adenine: step 1/1. Its function is as follows. Catalyzes a salvage reaction resulting in the formation of AMP, that is energically less costly than de novo synthesis. The polypeptide is Adenine phosphoribosyltransferase (Bifidobacterium longum (strain NCC 2705)).